Consider the following 251-residue polypeptide: HTH-type transcriptional regulator UlaR (251 aa).

The HTH deoR-type domain maps to Glu-3 to Ala-58. The segment at residues Val-20–Asp-39 is a DNA-binding region (H-T-H motif).

Its subcellular location is the cytoplasm. Its function is as follows. Represses ulaG and the ulaABCDEF operon. The sequence is that of HTH-type transcriptional regulator UlaR from Escherichia coli O139:H28 (strain E24377A / ETEC).